The primary structure comprises 93 residues: MARSLKKGPFVDDHVMKKVLAAKAANDNKPIKTWSRRSMIIPEMIGLTFNVHNGKGFIPVYVTENHIGYKLGEFAPTRTFKGHKGSVQKKIGK.

This sequence belongs to the universal ribosomal protein uS19 family.

In terms of biological role, protein S19 forms a complex with S13 that binds strongly to the 16S ribosomal RNA. The protein is Small ribosomal subunit protein uS19 of Campylobacter fetus subsp. fetus (strain 82-40).